Consider the following 143-residue polypeptide: 3-hydroxyacyl-[acyl-carrier-protein] dehydratase FabZ (143 aa).

Histidine 49 is an active-site residue.

It belongs to the thioester dehydratase family. FabZ subfamily.

The protein resides in the cytoplasm. It carries out the reaction a (3R)-hydroxyacyl-[ACP] = a (2E)-enoyl-[ACP] + H2O. Functionally, involved in unsaturated fatty acids biosynthesis. Catalyzes the dehydration of short chain beta-hydroxyacyl-ACPs and long chain saturated and unsaturated beta-hydroxyacyl-ACPs. In Wolbachia sp. subsp. Drosophila simulans (strain wRi), this protein is 3-hydroxyacyl-[acyl-carrier-protein] dehydratase FabZ.